The following is a 130-amino-acid chain: Transcription antitermination protein NusB (130 aa).

Belongs to the NusB family.

Functionally, involved in transcription antitermination. Required for transcription of ribosomal RNA (rRNA) genes. Binds specifically to the boxA antiterminator sequence of the ribosomal RNA (rrn) operons. The chain is Transcription antitermination protein NusB from Geobacillus kaustophilus (strain HTA426).